We begin with the raw amino-acid sequence, 486 residues long: Protein nucleotidyltransferase YdiU (486 aa).

G90, G92, R93, K113, D125, G126, R176, and R183 together coordinate ATP. D252 acts as the Proton acceptor in catalysis. Residues N253 and D262 each contribute to the Mg(2+) site. ATP is bound at residue D262.

This sequence belongs to the SELO family. The cofactor is Mg(2+). It depends on Mn(2+) as a cofactor.

The catalysed reaction is L-seryl-[protein] + ATP = 3-O-(5'-adenylyl)-L-seryl-[protein] + diphosphate. The enzyme catalyses L-threonyl-[protein] + ATP = 3-O-(5'-adenylyl)-L-threonyl-[protein] + diphosphate. It catalyses the reaction L-tyrosyl-[protein] + ATP = O-(5'-adenylyl)-L-tyrosyl-[protein] + diphosphate. It carries out the reaction L-histidyl-[protein] + UTP = N(tele)-(5'-uridylyl)-L-histidyl-[protein] + diphosphate. The catalysed reaction is L-seryl-[protein] + UTP = O-(5'-uridylyl)-L-seryl-[protein] + diphosphate. The enzyme catalyses L-tyrosyl-[protein] + UTP = O-(5'-uridylyl)-L-tyrosyl-[protein] + diphosphate. Nucleotidyltransferase involved in the post-translational modification of proteins. It can catalyze the addition of adenosine monophosphate (AMP) or uridine monophosphate (UMP) to a protein, resulting in modifications known as AMPylation and UMPylation. The sequence is that of Protein nucleotidyltransferase YdiU from Pseudomonas entomophila (strain L48).